A 280-amino-acid chain; its full sequence is UDP-3-O-acyl-N-acetylglucosamine deacetylase (280 aa).

3 residues coordinate Zn(2+): histidine 77, histidine 238, and aspartate 242. The active-site Proton donor is histidine 265.

The protein belongs to the LpxC family. Zn(2+) is required as a cofactor.

The catalysed reaction is a UDP-3-O-[(3R)-3-hydroxyacyl]-N-acetyl-alpha-D-glucosamine + H2O = a UDP-3-O-[(3R)-3-hydroxyacyl]-alpha-D-glucosamine + acetate. Its pathway is glycolipid biosynthesis; lipid IV(A) biosynthesis; lipid IV(A) from (3R)-3-hydroxytetradecanoyl-[acyl-carrier-protein] and UDP-N-acetyl-alpha-D-glucosamine: step 2/6. Its function is as follows. Catalyzes the hydrolysis of UDP-3-O-myristoyl-N-acetylglucosamine to form UDP-3-O-myristoylglucosamine and acetate, the committed step in lipid A biosynthesis. This is UDP-3-O-acyl-N-acetylglucosamine deacetylase from Trichormus variabilis (strain ATCC 29413 / PCC 7937) (Anabaena variabilis).